Here is a 1392-residue protein sequence, read N- to C-terminus: ABC transporter G family member 42 (1392 aa).

Positions 1-18 (MTMSQTDGVEFASRNTNE) are enriched in polar residues. Residues 1–26 (MTMSQTDGVEFASRNTNENGHDDDDQ) are disordered. The ABC transporter 1 domain occupies 139–413 (SKLSRFMCSN…FEDCGFKCPN (275 aa)). 173–180 (GPPSCGKT) lines the ATP pocket. An ABC transmembrane type-2 1 domain is found at 491–703 (DMLKACSRRE…AEIGLTANEF (213 aa)). The next 6 helical transmembrane spans lie at 509-529 (FVYV…MTVY), 543-563 (YLMG…LPEL), 596-616 (IPIS…VIGY), 627-647 (FLIL…IAAV), 652-672 (VVAT…GGFI), and 739-759 (FGAL…ALTF). The ABC transporter 2 domain maps to 800–1045 (FTFQDVQYII…VIEYFMRIHG (246 aa)). An ATP-binding site is contributed by 837 to 844 (GVSGAGKT). Positions 1117-1331 (EQFKACLWKQ…VLNGLLTSQY (215 aa)) constitute an ABC transmembrane type-2 2 domain. Transmembrane regions (helical) follow at residues 1136-1156 (YNLT…ILFW), 1175-1195 (MFTV…FSVA), 1215-1237 (YSLA…YVII), 1255-1275 (FYSI…LVVV), 1281-1301 (IAFT…GYVM), 1309-1329 (WWIW…LLTS), and 1364-1384 (LVAV…AFFI).

The protein belongs to the ABC transporter superfamily. ABCG family. PDR (TC 3.A.1.205) subfamily. In terms of tissue distribution, confined to shoots.

It is found in the membrane. May be a general defense protein. The sequence is that of ABC transporter G family member 42 (ABCG42) from Arabidopsis thaliana (Mouse-ear cress).